The primary structure comprises 856 residues: DNA mismatch repair protein MutS (856 aa).

ATP is bound at residue 607 to 614 (GPNMSGKS).

This sequence belongs to the DNA mismatch repair MutS family.

Its function is as follows. This protein is involved in the repair of mismatches in DNA. It is possible that it carries out the mismatch recognition step. This protein has a weak ATPase activity. This chain is DNA mismatch repair protein MutS, found in Lactobacillus delbrueckii subsp. bulgaricus (strain ATCC 11842 / DSM 20081 / BCRC 10696 / JCM 1002 / NBRC 13953 / NCIMB 11778 / NCTC 12712 / WDCM 00102 / Lb 14).